A 187-amino-acid polypeptide reads, in one-letter code: Elongation factor P (187 aa).

The protein belongs to the elongation factor P family.

Its subcellular location is the cytoplasm. It functions in the pathway protein biosynthesis; polypeptide chain elongation. Involved in peptide bond synthesis. Stimulates efficient translation and peptide-bond synthesis on native or reconstituted 70S ribosomes in vitro. Probably functions indirectly by altering the affinity of the ribosome for aminoacyl-tRNA, thus increasing their reactivity as acceptors for peptidyl transferase. The protein is Elongation factor P of Paenarthrobacter aurescens (strain TC1).